Consider the following 710-residue polypeptide: Polyribonucleotide nucleotidyltransferase (710 aa).

2 residues coordinate Mg(2+): D485 and D491. One can recognise a KH domain in the interval P552–I611. One can recognise an S1 motif domain in the interval G621–K689.

Belongs to the polyribonucleotide nucleotidyltransferase family. Requires Mg(2+) as cofactor.

The protein resides in the cytoplasm. The enzyme catalyses RNA(n+1) + phosphate = RNA(n) + a ribonucleoside 5'-diphosphate. In terms of biological role, involved in mRNA degradation. Catalyzes the phosphorolysis of single-stranded polyribonucleotides processively in the 3'- to 5'-direction. This chain is Polyribonucleotide nucleotidyltransferase, found in Shouchella clausii (strain KSM-K16) (Alkalihalobacillus clausii).